The following is a 124-amino-acid chain: Small ribosomal subunit protein uS12 (124 aa).

The residue at position 89 (D89) is a 3-methylthioaspartic acid. Residues 105–124 (QGVKNRGQARSRYGAKKEKK) are disordered. The span at 111 to 124 (GQARSRYGAKKEKK) shows a compositional bias: basic residues.

The protein belongs to the universal ribosomal protein uS12 family. Part of the 30S ribosomal subunit. Contacts proteins S8 and S17. May interact with IF1 in the 30S initiation complex.

With S4 and S5 plays an important role in translational accuracy. Functionally, interacts with and stabilizes bases of the 16S rRNA that are involved in tRNA selection in the A site and with the mRNA backbone. Located at the interface of the 30S and 50S subunits, it traverses the body of the 30S subunit contacting proteins on the other side and probably holding the rRNA structure together. The combined cluster of proteins S8, S12 and S17 appears to hold together the shoulder and platform of the 30S subunit. This is Small ribosomal subunit protein uS12 from Micrococcus luteus (Micrococcus lysodeikticus).